The primary structure comprises 464 residues: Glutamate decarboxylase beta (464 aa).

An N6-(pyridoxal phosphate)lysine modification is found at lysine 275.

This sequence belongs to the group II decarboxylase family. Pyridoxal 5'-phosphate serves as cofactor.

The enzyme catalyses L-glutamate + H(+) = 4-aminobutanoate + CO2. Its function is as follows. Converts internalized glutamate to GABA and increases the internal pH. Involved in glutamate-dependent acid resistance in gastric fluid. The protein is Glutamate decarboxylase beta (gadB) of Listeria innocua serovar 6a (strain ATCC BAA-680 / CLIP 11262).